A 332-amino-acid chain; its full sequence is Phosphate acyltransferase (332 aa).

Belongs to the PlsX family. Homodimer. Probably interacts with PlsY.

The protein resides in the cytoplasm. The enzyme catalyses a fatty acyl-[ACP] + phosphate = an acyl phosphate + holo-[ACP]. The protein operates within lipid metabolism; phospholipid metabolism. Catalyzes the reversible formation of acyl-phosphate (acyl-PO(4)) from acyl-[acyl-carrier-protein] (acyl-ACP). This enzyme utilizes acyl-ACP as fatty acyl donor, but not acyl-CoA. In Streptococcus mutans serotype c (strain ATCC 700610 / UA159), this protein is Phosphate acyltransferase.